The chain runs to 280 residues: Protein HEAT-INDUCED TAS1 TARGET 4 (280 aa).

Belongs to the heat induced plant HTT protein family. In terms of tissue distribution, expressed in seedlings, leaves, stems, inflorescences and siliques.

The protein resides in the cytoplasm. The protein localises to the nucleus. Its function is as follows. Mediates both basal and acquired thermotolerance. The protein is Protein HEAT-INDUCED TAS1 TARGET 4 of Arabidopsis thaliana (Mouse-ear cress).